Reading from the N-terminus, the 1326-residue chain is Coiled-coil domain-containing protein 171 (1326 aa).

Coiled-coil stretches lie at residues 53–294 (TTKH…RAAH), 323–391 (AEAV…RLQY), 450–561 (SFSV…AFHK), 597–630 (SELCAVLQENVDALIADLNRANEKIRHLEYICKN), 660–707 (WHRQ…EQLV), 765–792 (FKLEIRTLAQALSTVEEKKQEEAKMKKK), 979–1143 (FTQR…KECV), and 1217–1241 (IMTLEKEMTSHRSHIAALKSELHTA). The disordered stretch occupies residues 1306-1326 (SSHSSPVTMSANANRPTQIGL).

In Homo sapiens (Human), this protein is Coiled-coil domain-containing protein 171 (CCDC171).